Here is a 584-residue protein sequence, read N- to C-terminus: Alkaline nuclease (584 aa).

Positions 409–430 (GGGADHHLRGSPGDSPPPIPFE) are disordered.

Belongs to the herpesviridae alkaline nuclease family. As to quaternary structure, interacts with major DNA-binding protein; this interaction increases the nuclease processivity of the alkaline exonuclease.

Its subcellular location is the host nucleus. The protein localises to the host cytoplasm. Functionally, plays a role in processing non linear or branched viral DNA intermediates in order to promote the production of mature packaged unit-length linear progeny viral DNA molecules. Exhibits endonuclease and exonuclease activities and accepts both double-stranded and single-stranded DNA as substrate. Exonuclease digestion of DNA is in the 5'-&gt; 3' direction and the products are 5'-monophosphate nucleosides. Additionally, forms a recombinase with the major DNA-binding protein, which displays strand exchange activity. The polypeptide is Alkaline nuclease (UL98) (Human cytomegalovirus (strain AD169) (HHV-5)).